The following is a 185-amino-acid chain: Potassium-transporting ATPase KdpC subunit (185 aa).

The chain crosses the membrane as a helical span at residues 14-34 (ALSLLTGVAYPLALTGIAAVI).

It belongs to the KdpC family. In terms of assembly, the system is composed of three essential subunits: KdpA, KdpB and KdpC.

The protein resides in the cell inner membrane. Its function is as follows. Part of the high-affinity ATP-driven potassium transport (or Kdp) system, which catalyzes the hydrolysis of ATP coupled with the electrogenic transport of potassium into the cytoplasm. This subunit acts as a catalytic chaperone that increases the ATP-binding affinity of the ATP-hydrolyzing subunit KdpB by the formation of a transient KdpB/KdpC/ATP ternary complex. In Cereibacter sphaeroides (strain ATCC 17023 / DSM 158 / JCM 6121 / CCUG 31486 / LMG 2827 / NBRC 12203 / NCIMB 8253 / ATH 2.4.1.) (Rhodobacter sphaeroides), this protein is Potassium-transporting ATPase KdpC subunit.